The sequence spans 313 residues: Ribosomal RNA small subunit methyltransferase H (313 aa).

Residues 33-35 (AGH), Asp-53, Phe-82, Asp-103, and Gln-110 contribute to the S-adenosyl-L-methionine site.

It belongs to the methyltransferase superfamily. RsmH family.

It is found in the cytoplasm. It carries out the reaction cytidine(1402) in 16S rRNA + S-adenosyl-L-methionine = N(4)-methylcytidine(1402) in 16S rRNA + S-adenosyl-L-homocysteine + H(+). Specifically methylates the N4 position of cytidine in position 1402 (C1402) of 16S rRNA. In Ruminiclostridium cellulolyticum (strain ATCC 35319 / DSM 5812 / JCM 6584 / H10) (Clostridium cellulolyticum), this protein is Ribosomal RNA small subunit methyltransferase H.